Here is a 308-residue protein sequence, read N- to C-terminus: S-crystallin SL18 (308 aa).

Positions 2 to 80 constitute a GST N-terminal domain; sequence PKYTLYYFNS…YLARQFGFYG (79 aa). The interval 165 to 205 is disordered; the sequence is EMRSQDSMVEPPSQKLSPELESQSSLCSERPQCGPPDPMMG. The segment covering 178 to 191 has biased composition (polar residues); that stretch reads QKLSPELESQSSLC. Positions 185–308 constitute a GST C-terminal domain; the sequence is ESQSSLCSER…YFTLRNYTDF (124 aa).

This sequence belongs to the GST superfamily. Lens.

Functionally, S-crystallins are structural components of squids and octopi eye lens. Contains relatively little if any GST activity. This Nototodarus sloanii (Wellington flying squid) protein is S-crystallin SL18.